A 282-amino-acid polypeptide reads, in one-letter code: Secretory carrier-associated membrane protein 1 (282 aa).

The tract at residues 1–49 (MSRYQSHSFDDGEINPFANPTSVPAATSKLSPLPPEPYDRGATMDIPLD) is disordered. Topologically, residues 1 to 117 (MSRYQSHSFD…EIPIHLQRIQ (117 aa)) are cytoplasmic. Polar residues predominate over residues 18–30 (ANPTSVPAATSKL). Position 31 is a phosphoserine (S31). The stretch at 48 to 93 (LDSGKDLKAKEKELREKEAELKRREQEIKRKEDAIAQAGIVIEEKN) forms a coiled coil. 4 helical membrane-spanning segments follow: residues 118–138 (YVAF…IVAV), 150–170 (IWFL…VMWY), 185–205 (FGWF…AAVA), and 233–253 (IFYF…IWVI). At 254–282 (QQVYMYFRGSGKAAEMKQEATRRAMMAAL) the chain is on the cytoplasmic side.

This sequence belongs to the SCAMP family.

The protein resides in the cell membrane. Its subcellular location is the cytoplasmic vesicle. It is found in the secretory vesicle membrane. Functionally, probably involved in membrane trafficking. In Arabidopsis thaliana (Mouse-ear cress), this protein is Secretory carrier-associated membrane protein 1 (SCAMP1).